The following is a 417-amino-acid chain: Serine hydroxymethyltransferase (417 aa).

(6S)-5,6,7,8-tetrahydrofolate is bound by residues L122 and 126–128; that span reads GHL. Residue K230 is modified to N6-(pyridoxal phosphate)lysine. Residue 355 to 357 participates in (6S)-5,6,7,8-tetrahydrofolate binding; it reads SPF.

It belongs to the SHMT family. In terms of assembly, homodimer. The cofactor is pyridoxal 5'-phosphate.

Its subcellular location is the cytoplasm. The enzyme catalyses (6R)-5,10-methylene-5,6,7,8-tetrahydrofolate + glycine + H2O = (6S)-5,6,7,8-tetrahydrofolate + L-serine. The protein operates within one-carbon metabolism; tetrahydrofolate interconversion. It participates in amino-acid biosynthesis; glycine biosynthesis; glycine from L-serine: step 1/1. In terms of biological role, catalyzes the reversible interconversion of serine and glycine with tetrahydrofolate (THF) serving as the one-carbon carrier. This reaction serves as the major source of one-carbon groups required for the biosynthesis of purines, thymidylate, methionine, and other important biomolecules. Also exhibits THF-independent aldolase activity toward beta-hydroxyamino acids, producing glycine and aldehydes, via a retro-aldol mechanism. The chain is Serine hydroxymethyltransferase from Francisella tularensis subsp. tularensis (strain FSC 198).